Consider the following 721-residue polypeptide: Polyribonucleotide nucleotidyltransferase (721 aa).

The Mg(2+) site is built by Asp-495 and Asp-501. Residues 562–621 (PRLLSFRIDPELIGTVIGPGGRTIKGITERTNTKIDIEDGGIVTIASHDGAAAEEAQKII) form the KH domain. Residues 631-699 (GEIFPGVVTR…SRGRINLTLR (69 aa)) form the S1 motif domain.

It belongs to the polyribonucleotide nucleotidyltransferase family. Requires Mg(2+) as cofactor.

Its subcellular location is the cytoplasm. It carries out the reaction RNA(n+1) + phosphate = RNA(n) + a ribonucleoside 5'-diphosphate. In terms of biological role, involved in mRNA degradation. Catalyzes the phosphorolysis of single-stranded polyribonucleotides processively in the 3'- to 5'-direction. In Prochlorococcus marinus subsp. pastoris (strain CCMP1986 / NIES-2087 / MED4), this protein is Polyribonucleotide nucleotidyltransferase.